We begin with the raw amino-acid sequence, 305 residues long: Myb-like transcriptional regulator basR (305 aa).

Myb-like domains lie at 5–59 (RRRW…YNRF), 60–110 (TGGL…HHCL), and 111–162 (NPEL…TILS). The interval 175 to 215 (PCCDSPSPSKSSRRPPSTPTSTPQVPGSRQGSSYDPYDYGS) is disordered. Polar residues predominate over residues 198–207 (QVPGSRQGSS).

It is found in the nucleus. Transcription regulator that acts as a central regulatory node for the integration of external bacterial signals leading to the regulation of secondary metabolite gene clusters such as orsellinic, lecanoric acid, cichorine, 2,4-dihydroxy-3-methyl-6-(2-oxopropyl)benzaldehyde (dba), emericellamide or microperfuranone clusters. The protein is Myb-like transcriptional regulator basR of Emericella nidulans (strain FGSC A4 / ATCC 38163 / CBS 112.46 / NRRL 194 / M139) (Aspergillus nidulans).